Here is a 400-residue protein sequence, read N- to C-terminus: 3-phenylpropionate/cinnamic acid dioxygenase ferredoxin--NAD(+) reductase component (400 aa).

5 to 36 contacts FAD; that stretch reads TIIIVGGGQAAAMAAASLRQQGFTGELHLFSD. 146–174 lines the NAD(+) pocket; that stretch reads SVVIIGAGTIGLELAASATQRRCKVTVIE.

This sequence belongs to the bacterial ring-hydroxylating dioxygenase ferredoxin reductase family. As to quaternary structure, this dioxygenase system consists of four proteins: the two subunits of the hydroxylase component (HcaE and HcaF), a ferredoxin (HcaC) and a ferredoxin reductase (HcaD). FAD serves as cofactor.

It catalyses the reaction 2 reduced [2Fe-2S]-[ferredoxin] + NAD(+) + H(+) = 2 oxidized [2Fe-2S]-[ferredoxin] + NADH. It participates in aromatic compound metabolism; 3-phenylpropanoate degradation. Functionally, part of the multicomponent 3-phenylpropionate dioxygenase, that converts 3-phenylpropionic acid (PP) and cinnamic acid (CI) into 3-phenylpropionate-dihydrodiol (PP-dihydrodiol) and cinnamic acid-dihydrodiol (CI-dihydrodiol), respectively. This chain is 3-phenylpropionate/cinnamic acid dioxygenase ferredoxin--NAD(+) reductase component, found in Escherichia coli (strain K12 / MC4100 / BW2952).